The following is a 223-amino-acid chain: Killer cell lectin-like receptor subfamily B member 1B allele A (223 aa).

Topologically, residues 1–45 (MDTAVVYADLHLARTGEPKREPPPSLSPDTCQCPRWHRLALKLGC) are cytoplasmic. The short motif at 5-10 (VVYADL) is the ITIM motif element. The short motif at 31–34 (CQCP) is the LCK-binding motif element. A helical; Signal-anchor for type II membrane protein transmembrane segment spans residues 46–66 (ACLILLVLSVIGLGVLVLTLL). Over 67–223 (QKPLIQNSPA…LKRESTCNDS (157 aa)) the chain is Extracellular. Residues 101 to 211 (HQDKCFHVSQ…CDSDNIWICQ (111 aa)) form the C-type lectin domain. Intrachain disulfides connect C122/C210 and C189/C202.

Homodimer; disulfide-linked. Interacts with tyrosine kinase LCK. Binds PTPN6/SHP-1 in a phosphorylation-dependent manner. In terms of tissue distribution, expressed in a subset of natural killer cells.

The protein resides in the membrane. Functionally, receptor for CLEC2D/OCIL. Ligand-binding contributes to inhibition of cytotoxic natural killer (NK) cells. May mediate MHC class I-independent 'missing-self' recognition of allografts, tumor cells and virus-infected cells. The chain is Killer cell lectin-like receptor subfamily B member 1B allele A from Rattus norvegicus (Rat).